The primary structure comprises 158 residues: NAD(P)H-quinone oxidoreductase subunit J, chloroplastic (158 aa).

The protein belongs to the complex I 30 kDa subunit family. In terms of assembly, NDH is composed of at least 16 different subunits, 5 of which are encoded in the nucleus.

Its subcellular location is the plastid. It localises to the chloroplast thylakoid membrane. The catalysed reaction is a plastoquinone + NADH + (n+1) H(+)(in) = a plastoquinol + NAD(+) + n H(+)(out). It carries out the reaction a plastoquinone + NADPH + (n+1) H(+)(in) = a plastoquinol + NADP(+) + n H(+)(out). Functionally, NDH shuttles electrons from NAD(P)H:plastoquinone, via FMN and iron-sulfur (Fe-S) centers, to quinones in the photosynthetic chain and possibly in a chloroplast respiratory chain. The immediate electron acceptor for the enzyme in this species is believed to be plastoquinone. Couples the redox reaction to proton translocation, and thus conserves the redox energy in a proton gradient. The chain is NAD(P)H-quinone oxidoreductase subunit J, chloroplastic from Eucalyptus globulus subsp. globulus (Tasmanian blue gum).